The primary structure comprises 225 residues: MVVINGVKYACETCIRGHRAAQCTHTDGPLQMIRRKGRPSTTCGHCKELRRTKNFNPSGGCMCASARRPAVGSKEDETRCRCDEGEPCKCHTKRKSSRKSKGGSCHRRANDEAAHVNGLGIADLDVLLGLNGRSSDVDMTTTLPSLKPPLQNGEIKADSIDNLDLASLDPLEQSPSISMEPVSINETGSAYTTTNTALNDIDIPFSINELNELYKQVSSHNSHSQ.

The segment at residues 1 to 40 (MVVINGVKYACETCIRGHRAAQCTHTDGPLQMIRRKGRPS) is a DNA-binding region (copper-fist). The binds copper and DNA stretch occupies residues 1 to 108 (MVVINGVKYA…KSKGGSCHRR (108 aa)). Residues C11, C14, C23, and H25 each coordinate Zn(2+). The interval 109 to 225 (ANDEAAHVNG…QVSSHNSHSQ (117 aa)) is required for transcriptional activation.

The protein localises to the nucleus. Its function is as follows. Trans-acting regulatory protein that activates transcription of the CUP1 gene (metallothionein) in response to copper ions. Binds to the CUP1 UAS sequence 5'-GCTTCTTTTCCGCTGA-3'. Binds DNA only in presence of copper or silver. Copper seems to alter the conformation of the protein. The chain is Transcriptional activator protein CUP2 (CUP2) from Saccharomyces cerevisiae (strain ATCC 204508 / S288c) (Baker's yeast).